A 149-amino-acid polypeptide reads, in one-letter code: Cytochrome c-type biogenesis protein CcmE (149 aa).

The Cytoplasmic segment spans residues 1-7; it reads MKPRHKK. Residues 8–28 form a helical; Signal-anchor for type II membrane protein membrane-spanning segment; the sequence is MAVIALSVSALTVAVVLVLNA. The Periplasmic portion of the chain corresponds to 29–149; sequence FQSNLVFFFS…AKAQKTSLAQ (121 aa). The heme site is built by His-123 and Tyr-127.

This sequence belongs to the CcmE/CycJ family.

It is found in the cell inner membrane. Functionally, heme chaperone required for the biogenesis of c-type cytochromes. Transiently binds heme delivered by CcmC and transfers the heme to apo-cytochromes in a process facilitated by CcmF and CcmH. This Nitrosomonas europaea (strain ATCC 19718 / CIP 103999 / KCTC 2705 / NBRC 14298) protein is Cytochrome c-type biogenesis protein CcmE.